Reading from the N-terminus, the 154-residue chain is 3-hydroxyacyl-[acyl-carrier-protein] dehydratase FabZ (154 aa).

Residue H55 is part of the active site.

The protein belongs to the thioester dehydratase family. FabZ subfamily.

The protein resides in the cytoplasm. It catalyses the reaction a (3R)-hydroxyacyl-[ACP] = a (2E)-enoyl-[ACP] + H2O. Its function is as follows. Involved in unsaturated fatty acids biosynthesis. Catalyzes the dehydration of short chain beta-hydroxyacyl-ACPs and long chain saturated and unsaturated beta-hydroxyacyl-ACPs. This chain is 3-hydroxyacyl-[acyl-carrier-protein] dehydratase FabZ, found in Nitratidesulfovibrio vulgaris (strain ATCC 29579 / DSM 644 / CCUG 34227 / NCIMB 8303 / VKM B-1760 / Hildenborough) (Desulfovibrio vulgaris).